The chain runs to 480 residues: Protein disulfide-isomerase 5-4 (480 aa).

2 N-linked (GlcNAc...) asparagine glycosylation sites follow: Asn-74 and Asn-99. A Thioredoxin domain is found at 120-263; that stretch reads FHAGEVLSLI…LVKMVVSLVE (144 aa). Residues Cys-170 and Cys-173 each act as nucleophile in the active site. The cysteines at positions 170 and 173 are disulfide-linked. 3 N-linked (GlcNAc...) asparagine glycosylation sites follow: Asn-280, Asn-326, and Asn-376. The helical transmembrane segment at 439 to 459 threads the bilayer; sequence FSHFITNVCAIIGGVFTVAGI.

It belongs to the protein disulfide isomerase family. In terms of tissue distribution, widely expressed.

It is found in the membrane. Acts as a protein-folding catalyst that interacts with nascent polypeptides to catalyze the formation, isomerization, and reduction or oxidation of disulfide bonds. The sequence is that of Protein disulfide-isomerase 5-4 (PDIL5-4) from Arabidopsis thaliana (Mouse-ear cress).